A 340-amino-acid chain; its full sequence is Adenine deaminase (340 aa).

Zn(2+) is bound by residues H17, H19, and H197. The Proton donor role is filled by E200. D278 is a binding site for Zn(2+). D279 is a binding site for substrate.

The protein belongs to the metallo-dependent hydrolases superfamily. Adenosine and AMP deaminases family. Adenine deaminase type 2 subfamily. Zn(2+) is required as a cofactor.

The enzyme catalyses adenine + H2O + H(+) = hypoxanthine + NH4(+). Its function is as follows. Catalyzes the hydrolytic deamination of adenine to hypoxanthine. Plays an important role in the purine salvage pathway and in nitrogen catabolism. The polypeptide is Adenine deaminase (Streptomyces coelicolor (strain ATCC BAA-471 / A3(2) / M145)).